The primary structure comprises 448 residues: MSTMTPAEIVSELDKHIIGQGRAKKAVAVALRNRWRRQQVEDPLRQEITPKNILMIGPTGVGKTEIARRLAKLADAPFIKIEATKFTEVGYVGRDVDSIVRDLIEISVKQTRETEMRKVRTKAEDQAEDRILDILLPSARPVGFGASSSAADTVDESSTTRQTFRKRLREGLLDDKEIELDVEQPQVGMDIMGPPGMEDMTEQIRSMFANIGGGKKTRRKLKVKEALKVLTDEEAGKMLNDEEVKTKAVQNVEQNGIVFLDEIDKIASRNEAGGGEVSRQGVQRDLLPLVEGTTINTKYGMVKTDHILFIASGAFHLAKPSDLIPELQGRFPIRVELDSLSVNDFESILVSTDASLVKQYQALLATEDVHLEFADDGIRRLAEIAYSVNEKTENIGARRLYTVIEKLLEEVSFAAGNHSGRTVQIDAAYVDRALNEVAEDEDLSRYVL.

Residues Ile18, 60-65 (GVGKTE), Asp261, Glu326, and Arg398 contribute to the ATP site.

This sequence belongs to the ClpX chaperone family. HslU subfamily. As to quaternary structure, a double ring-shaped homohexamer of HslV is capped on each side by a ring-shaped HslU homohexamer. The assembly of the HslU/HslV complex is dependent on binding of ATP.

It is found in the cytoplasm. Its function is as follows. ATPase subunit of a proteasome-like degradation complex; this subunit has chaperone activity. The binding of ATP and its subsequent hydrolysis by HslU are essential for unfolding of protein substrates subsequently hydrolyzed by HslV. HslU recognizes the N-terminal part of its protein substrates and unfolds these before they are guided to HslV for hydrolysis. This Paraburkholderia phytofirmans (strain DSM 17436 / LMG 22146 / PsJN) (Burkholderia phytofirmans) protein is ATP-dependent protease ATPase subunit HslU.